The sequence spans 772 residues: Calcium-binding mitochondrial carrier protein (772 aa).

Positions 1–377 (MFANRVRQAQ…SISDFEKSTG (377 aa)) are N-terminal domain. EF-hand domains follow at residues 132-165 (LDAD…ELMA), 166-201 (KPEA…SLDP), 235-270 (LQQE…VKLR), and 347-382 (ITPL…NINK). The Ca(2+) site is built by aspartate 145, aspartate 147, threonine 149, tyrosine 151, glutamate 156, aspartate 179, aspartate 181, asparagine 183, tyrosine 185, and aspartate 190. Residues aspartate 360, asparagine 362, aspartate 364, lysine 366, and aspartate 371 each contribute to the Ca(2+) site. Residues 378 to 422 (LNINKIGGGTNYSDSYPSDSHVTIQNSSTTPSPSTPITNTAAAIA) form a linker loop domain region. Positions 432-720 (AQQVLESIEN…KALLPDAEYK (289 aa)) are carrier domain. Solcar repeat units follow at residues 436–526 (LESI…LRDL), 535–616 (IYFP…MKTI), and 624–712 (LGPM…LQKA). 6 consecutive transmembrane segments (helical) span residues 442 to 459 (FALG…VYPI), 501 to 520 (GILP…LTVN), 545 to 558 (GFAG…TNPL), 591 to 610 (GAGA…FPTY), 630 to 647 (LLAG…VTPA), and 687 to 706 (GALA…LVSY). A C-terminal domain region spans residues 721-772 (PPTNAPITQKDFDVIRGNTNTVQRVIDMESKFGTLHQTRDNNKSSNGGENKN). Positions 751-772 (KFGTLHQTRDNNKSSNGGENKN) are disordered. The segment covering 763–772 (KSSNGGENKN) has biased composition (low complexity).

This sequence belongs to the mitochondrial carrier (TC 2.A.29) family. As to quaternary structure, homodimer (via N-terminus).

Its subcellular location is the mitochondrion inner membrane. Functionally, mitochondrial and calcium-binding carrier that catalyzes the calcium-dependent exchange of cytoplasmic glutamate with mitochondrial aspartate across the mitochondrial inner membrane. This chain is Calcium-binding mitochondrial carrier protein (mcfO), found in Dictyostelium discoideum (Social amoeba).